The chain runs to 458 residues: Exodeoxyribonuclease 7 large subunit (458 aa).

It belongs to the XseA family. Heterooligomer composed of large and small subunits.

It is found in the cytoplasm. It catalyses the reaction Exonucleolytic cleavage in either 5'- to 3'- or 3'- to 5'-direction to yield nucleoside 5'-phosphates.. Its function is as follows. Bidirectionally degrades single-stranded DNA into large acid-insoluble oligonucleotides, which are then degraded further into small acid-soluble oligonucleotides. The sequence is that of Exodeoxyribonuclease 7 large subunit from Serratia proteamaculans (strain 568).